Consider the following 475-residue polypeptide: UDP-N-acetylmuramate--L-alanine ligase (475 aa).

112-118 (GTHGKTT) provides a ligand contact to ATP.

This sequence belongs to the MurCDEF family.

Its subcellular location is the cytoplasm. It carries out the reaction UDP-N-acetyl-alpha-D-muramate + L-alanine + ATP = UDP-N-acetyl-alpha-D-muramoyl-L-alanine + ADP + phosphate + H(+). It participates in cell wall biogenesis; peptidoglycan biosynthesis. In terms of biological role, cell wall formation. This chain is UDP-N-acetylmuramate--L-alanine ligase, found in Paracidovorax citrulli (strain AAC00-1) (Acidovorax citrulli).